A 543-amino-acid polypeptide reads, in one-letter code: Sarafotoxin (543 aa).

An N-terminal signal peptide occupies residues Met-1–Gly-23. A propeptide spanning residues Lys-24–Leu-69 is cleaved from the precursor. The interval Gly-45–Asn-65 is disordered. 12 repeat units span residues Gly-51–Trp-90, Arg-91–Trp-130, Arg-131–Trp-170, Arg-171–Trp-210, Arg-211–Trp-250, Arg-251–Trp-290, Arg-291–Trp-330, Arg-331–Trp-370, Arg-371–Trp-410, Arg-411–Trp-450, Arg-451–Trp-490, and Arg-491–Trp-530. The tract at residues Gly-51–Trp-530 is 12 X 40 AA tandem repeats. 2 cysteine pairs are disulfide-bonded: Cys-70-Cys-84 and Cys-72-Cys-80. Residues Asp-92–Leu-109 constitute a propeptide that is removed on maturation. Intrachain disulfides connect Cys-110-Cys-124 and Cys-112-Cys-120. The propeptide occupies Asp-132–Leu-149. Disulfide bonds link Cys-150–Cys-164 and Cys-152–Cys-160. The propeptide occupies Asp-172–Leu-189. 2 disulfide bridges follow: Cys-190–Cys-204 and Cys-192–Cys-200. Residues Asp-212–Leu-229 constitute a propeptide that is removed on maturation. 2 disulfides stabilise this stretch: Cys-230-Cys-244 and Cys-232-Cys-240. A propeptide spanning residues Asp-252–Leu-269 is cleaved from the precursor. Disulfide bonds link Cys-270-Cys-284 and Cys-272-Cys-280. A propeptide spanning residues Asp-292 to Leu-309 is cleaved from the precursor. 2 disulfide bridges follow: Cys-310-Cys-324 and Cys-312-Cys-320. The propeptide occupies Asp-332–Leu-349. 2 cysteine pairs are disulfide-bonded: Cys-350–Cys-364 and Cys-352–Cys-360. Positions Asp-372–Leu-389 are excised as a propeptide. 2 disulfide bridges follow: Cys-390–Cys-404 and Cys-392–Cys-400. Residues Asp-412 to Leu-429 constitute a propeptide that is removed on maturation. 2 disulfide bridges follow: Cys-430–Cys-444 and Cys-432–Cys-440. Residues Asp-452–Leu-469 constitute a propeptide that is removed on maturation. Cystine bridges form between Cys-470–Cys-484 and Cys-472–Cys-480. Residues Asp-492 to Leu-509 constitute a propeptide that is removed on maturation. Disulfide bonds link Cys-510–Cys-524 and Cys-512–Cys-520. Residues Asn-532–Gly-543 constitute a propeptide that is removed on maturation.

Belongs to the endothelin/sarafotoxin family. In terms of tissue distribution, expressed by the venom gland.

It is found in the secreted. In terms of biological role, vasoconstrictor activity. These toxins cause cardiac arrest probably as a result of coronary vasospasm. Vasoconstrictor activity. Causes cardiac arrest probably as a result of coronary vasospasm. Displays high agonistic activities towards endothelin-2 receptor (EDNRB) (displays affinity in the picomolar range) and endothelin-1 receptor (EDNRA) (lower affinities). This Atractaspis engaddensis (Israeli burrowing asp) protein is Sarafotoxin.